A 121-amino-acid chain; its full sequence is MVHMHITAWALGLILFFVAYSLYSAGRKGKGVHMGLRLMYIIIIVTGFMLYMSIVKTATGSMHMWYGLKMLAGILVIGGMEMVLVKMSKNKPTGAVWGLFIVALVAVFYLGLKLPIGWKVF.

Helical transmembrane passes span Ile-6–Gly-26, Leu-38–Ala-58, Trp-65–Val-85, and Pro-92–Leu-112.

It belongs to the UPF0344 family.

It is found in the cell membrane. In Bacillus cereus (strain ATCC 14579 / DSM 31 / CCUG 7414 / JCM 2152 / NBRC 15305 / NCIMB 9373 / NCTC 2599 / NRRL B-3711), this protein is UPF0344 protein BC_1150.